The primary structure comprises 169 residues: Probable phospholipid hydroperoxide glutathione peroxidase (169 aa).

Cysteine 43 is an active-site residue.

It belongs to the glutathione peroxidase family. As to quaternary structure, monomer. Has a tendency to form higher mass oligomers. Interacts with FUNDC1; this interaction promotes GPX4 recruitment into mitochondria through TOM/TIM complex where it is degraded by mitophagy.

Its subcellular location is the cytoplasm. It catalyses the reaction a hydroperoxy polyunsaturated fatty acid + 2 glutathione = a hydroxy polyunsaturated fatty acid + glutathione disulfide + H2O. Protects cells and enzymes from oxidative damage, by catalyzing the reduction of hydrogen peroxide, lipid peroxides and organic hydroperoxide, by glutathione. This is Probable phospholipid hydroperoxide glutathione peroxidase (GPXle-1) from Solanum lycopersicum (Tomato).